A 101-amino-acid polypeptide reads, in one-letter code: NAD(P)H-quinone oxidoreductase subunit 4L (101 aa).

The next 3 helical transmembrane spans lie at 3 to 23 (LQYF…GLVT), 30 to 50 (VLMS…AFSN), and 64 to 84 (IFVI…VLAI).

Belongs to the complex I subunit 4L family. NDH-1 can be composed of about 15 different subunits; different subcomplexes with different compositions have been identified which probably have different functions.

The protein localises to the cellular thylakoid membrane. The catalysed reaction is a plastoquinone + NADH + (n+1) H(+)(in) = a plastoquinol + NAD(+) + n H(+)(out). It carries out the reaction a plastoquinone + NADPH + (n+1) H(+)(in) = a plastoquinol + NADP(+) + n H(+)(out). NDH-1 shuttles electrons from an unknown electron donor, via FMN and iron-sulfur (Fe-S) centers, to quinones in the respiratory and/or the photosynthetic chain. The immediate electron acceptor for the enzyme in this species is believed to be plastoquinone. Couples the redox reaction to proton translocation, and thus conserves the redox energy in a proton gradient. Cyanobacterial NDH-1 also plays a role in inorganic carbon-concentration. The sequence is that of NAD(P)H-quinone oxidoreductase subunit 4L from Leptolyngbya boryana (Plectonema boryanum).